Here is a 489-residue protein sequence, read N- to C-terminus: GTPase Der (489 aa).

EngA-type G domains are found at residues 3–166 (PVIA…PKDE) and 195–368 (IKIA…KSAV). GTP is bound by residues 9 to 16 (GRPNVGKS), 56 to 60 (DTGGI), 118 to 121 (NKID), 201 to 208 (GRPNVGKS), 248 to 252 (DTAGV), and 313 to 316 (NKWD). The KH-like domain maps to 369–453 (TRWPTSRLTQ…PIRIEFKGGE (85 aa)). Residues 451–489 (GGENPYEGNKNTLTDRQVNKKRRMMSHHKKADKKRRDKR) are disordered. Basic residues predominate over residues 469-489 (NKKRRMMSHHKKADKKRRDKR).

Belongs to the TRAFAC class TrmE-Era-EngA-EngB-Septin-like GTPase superfamily. EngA (Der) GTPase family. In terms of assembly, associates with the 50S ribosomal subunit.

Functionally, GTPase that plays an essential role in the late steps of ribosome biogenesis. This chain is GTPase Der, found in Pseudomonas syringae pv. tomato (strain ATCC BAA-871 / DC3000).